We begin with the raw amino-acid sequence, 231 residues long: L-ribulose-5-phosphate 4-epimerase SgbE (231 aa).

Substrate is bound by residues 27 to 28, 44 to 45, and 74 to 75; these read GN, SG, and SS. Zn(2+)-binding residues include Asp-76, His-95, and His-97. Catalysis depends on Asp-120, which acts as the Proton donor/acceptor. His-171 is a Zn(2+) binding site. Catalysis depends on Tyr-229, which acts as the Proton donor/acceptor.

The protein belongs to the aldolase class II family. AraD/FucA subfamily. Requires Zn(2+) as cofactor.

It catalyses the reaction L-ribulose 5-phosphate = D-xylulose 5-phosphate. In terms of biological role, catalyzes the interconversion of L-ribulose 5-phosphate (LRu5P) and D-xylulose 5-phosphate (D-Xu5P) via a retroaldol/aldol mechanism (carbon-carbon bond cleavage analogous to a class II aldolase reaction). May be involved in the utilization of 2,3-diketo-L-gulonate. The polypeptide is L-ribulose-5-phosphate 4-epimerase SgbE (Haemophilus influenzae (strain ATCC 51907 / DSM 11121 / KW20 / Rd)).